Here is a 508-residue protein sequence, read N- to C-terminus: Photosystem II CP47 reaction center protein (508 aa).

Transmembrane regions (helical) follow at residues 21-36 (SVHI…WAGS), 101-115 (IVFS…IWHW), 140-156 (GIHL…FGAF), 203-218 (IAAG…FHLS), 237-252 (VLSS…AFVV), and 457-472 (SFAL…HGAR).

It belongs to the PsbB/PsbC family. PsbB subfamily. In terms of assembly, PSII is composed of 1 copy each of membrane proteins PsbA, PsbB, PsbC, PsbD, PsbE, PsbF, PsbH, PsbI, PsbJ, PsbK, PsbL, PsbM, PsbT, PsbX, PsbY, PsbZ, Psb30/Ycf12, at least 3 peripheral proteins of the oxygen-evolving complex and a large number of cofactors. It forms dimeric complexes. Binds multiple chlorophylls. PSII binds additional chlorophylls, carotenoids and specific lipids. serves as cofactor.

Its subcellular location is the plastid. It is found in the chloroplast thylakoid membrane. In terms of biological role, one of the components of the core complex of photosystem II (PSII). It binds chlorophyll and helps catalyze the primary light-induced photochemical processes of PSII. PSII is a light-driven water:plastoquinone oxidoreductase, using light energy to abstract electrons from H(2)O, generating O(2) and a proton gradient subsequently used for ATP formation. This chain is Photosystem II CP47 reaction center protein, found in Nymphaea alba (White water-lily).